Consider the following 284-residue polypeptide: MNFIDQLARAERLHDSLLCVGLDPEPGKFPGAWKGDAGKIFDFCAAIVDATKDLVIAFKPQIAYFAAHRAEDQLERLMAYIKRTAPDVPVILDAKRGDIGSTAEQYAREAFERYQADAVTLSPFMGFDSIEPYLRYADKGVILLCRTSNPGGNDWQMQRLADVPGQPRLFEHLAHRAQTEWNRNGQLALVVGATYPAEIARVRELAPTLPLLIPGVGAQGGDAQATVQAGLVCDASGASTGPIIVNSSRAVLYASAGDDFAQAARRVALATRDALNAASAAARR.

Lysine 95 acts as the Proton donor in catalysis.

The protein belongs to the OMP decarboxylase family. Type 2 subfamily.

The enzyme catalyses orotidine 5'-phosphate + H(+) = UMP + CO2. Its pathway is pyrimidine metabolism; UMP biosynthesis via de novo pathway; UMP from orotate: step 2/2. The protein is Orotidine 5'-phosphate decarboxylase of Leptothrix cholodnii (strain ATCC 51168 / LMG 8142 / SP-6) (Leptothrix discophora (strain SP-6)).